The primary structure comprises 94 residues: Aspartyl/glutamyl-tRNA(Asn/Gln) amidotransferase subunit C (94 aa).

Residues 72 to 94 (PREKALQGAPEVSEGQFKVPRVV) form a disordered region.

Belongs to the GatC family. In terms of assembly, heterotrimer of A, B and C subunits.

It carries out the reaction L-glutamyl-tRNA(Gln) + L-glutamine + ATP + H2O = L-glutaminyl-tRNA(Gln) + L-glutamate + ADP + phosphate + H(+). The enzyme catalyses L-aspartyl-tRNA(Asn) + L-glutamine + ATP + H2O = L-asparaginyl-tRNA(Asn) + L-glutamate + ADP + phosphate + 2 H(+). Its function is as follows. Allows the formation of correctly charged Asn-tRNA(Asn) or Gln-tRNA(Gln) through the transamidation of misacylated Asp-tRNA(Asn) or Glu-tRNA(Gln) in organisms which lack either or both of asparaginyl-tRNA or glutaminyl-tRNA synthetases. The reaction takes place in the presence of glutamine and ATP through an activated phospho-Asp-tRNA(Asn) or phospho-Glu-tRNA(Gln). The chain is Aspartyl/glutamyl-tRNA(Asn/Gln) amidotransferase subunit C from Moorella thermoacetica (strain ATCC 39073 / JCM 9320).